Consider the following 809-residue polypeptide: Leucine-rich repeat and calponin homology domain-containing protein (809 aa).

The tract at residues 27 to 53 (GSASLPGSGTGSGSGIGHAGNTSSSTS) is disordered. Residues 34 to 44 (SGTGSGSGIGH) show a composition bias toward gly residues. 9 LRR repeats span residues 72-96 (EAHF…GTKY), 98-121 (LTDT…VTTF), 122-144 (AFLE…VKQL), 145-168 (SSLT…CFLP), 170-189 (QVLL…LGRL), 191-213 (QTLT…LGEL), 214-236 (RSLR…LTCL), 238-258 (LISL…IRHM), and 260-282 (TLVE…CMRG). 3 disordered regions span residues 295 to 373 (TKDE…LHCV), 423 to 442 (LSYA…QDDD), and 490 to 550 (KHPN…VDDV). The span at 319–336 (HNSSGNVLEASTTGSTNN) shows a compositional bias: polar residues. A compositionally biased stretch (basic and acidic residues) spans 351–368 (GLDKRWSHDAPTKSKTDS). Over residues 518 to 532 (NTLPKSIMKQNSNQI) the composition is skewed to polar residues. The region spanning 662-776 (QREETELMSQ…TVGELFRLHG (115 aa)) is the Calponin-homology (CH) domain. Positions 783 to 809 (GNSSGAATPTKSPTRTTRATMSPTPLA) are disordered. Residues 788-809 (AATPTKSPTRTTRATMSPTPLA) show a composition bias toward polar residues.

It localises to the cytoplasm. The protein resides in the cytoskeleton. It is found in the cell cortex. Its subcellular location is the cleavage furrow. Its function is as follows. May play a role in the stabilization of the actin-rich cell cortex during cell division. The chain is Leucine-rich repeat and calponin homology domain-containing protein from Drosophila melanogaster (Fruit fly).